Consider the following 142-residue polypeptide: Maximins y/H11 (142 aa).

Residues 1 to 18 (MNFKYIVAVSFLITSGYA) form the signal peptide. A propeptide spanning residues 19 to 43 (ESVKNDEQSLSQRDVLEEESLREIR) is cleaved from the precursor. F68 is modified (phenylalanine amide). A propeptide spanning residues 72-121 (SAEDHEVMKRLEAVIRDLDSLDHPEEASERETRGFNQEEIANLFTKKEKR) is cleaved from the precursor. I141 is subject to Isoleucine amide.

It belongs to the bombinin family. Expressed by the skin glands.

It localises to the secreted. Its function is as follows. Maximin-y shows antimicrobial activity against bacteria and against the fungus C.albicans. It has little hemolytic activity. In terms of biological role, maximin-H11 shows antimicrobial activity against bacteria and against the fungus C.albicans. Shows strong hemolytic activity. This chain is Maximins y/H11, found in Bombina maxima (Giant fire-bellied toad).